The sequence spans 237 residues: Class B acid phosphatase (237 aa).

A signal peptide spans 1-25; that stretch reads MRKVSLALSAACLLFTLNYTASALA. Residue Asp69 is the Nucleophile of the active site. Positions 69 and 71 each coordinate Mg(2+). Asp71 serves as the catalytic Proton donor. Substrate-binding positions include 137 to 138 and Lys177; that span reads TG. Residue Asp192 coordinates Mg(2+).

Belongs to the class B bacterial acid phosphatase family. In terms of assembly, homotetramer. Mg(2+) serves as cofactor.

It is found in the periplasm. It carries out the reaction a phosphate monoester + H2O = an alcohol + phosphate. In terms of biological role, dephosphorylates several organic phosphate monoesters. Also has a phosphotransferase activity catalyzing the transfer of low-energy phosphate groups from organic phosphate monoesters to free hydroxyl groups of various organic compounds. In Citrobacter rodentium (strain ICC168) (Citrobacter freundii biotype 4280), this protein is Class B acid phosphatase.